Here is a 236-residue protein sequence, read N- to C-terminus: MTKKEMLYEGKGKKLFKTDDENLLISEFKDDLTAFNAEKRGNESGKGALNCKISTEIFHLLEKNGIKTHLVETISDTEQVVKKCKIVPIEVIVRNVATGSLTKRLGIKDGTVLPFALVEFCLKDDALGDPFINDEHCLILNLVQNEAQISEIKNMARKINSILTPFFDNKNLRLIDFKIELGLTKDNELVLADEISPDSCRFWDKFSNEKLDKDRFRQDLGNVKMAYEEVLKRILN.

Belongs to the SAICAR synthetase family.

It catalyses the reaction 5-amino-1-(5-phospho-D-ribosyl)imidazole-4-carboxylate + L-aspartate + ATP = (2S)-2-[5-amino-1-(5-phospho-beta-D-ribosyl)imidazole-4-carboxamido]succinate + ADP + phosphate + 2 H(+). It participates in purine metabolism; IMP biosynthesis via de novo pathway; 5-amino-1-(5-phospho-D-ribosyl)imidazole-4-carboxamide from 5-amino-1-(5-phospho-D-ribosyl)imidazole-4-carboxylate: step 1/2. This chain is Phosphoribosylaminoimidazole-succinocarboxamide synthase, found in Campylobacter jejuni subsp. jejuni serotype O:6 (strain 81116 / NCTC 11828).